The chain runs to 86 residues: Omega-theraphotoxin-Hhn1f 4 (86 aa).

A signal peptide spans methionine 1 to alanine 21. A propeptide spanning residues serine 22 to arginine 50 is cleaved from the precursor. 3 disulfides stabilise this stretch: cysteine 52–cysteine 66, cysteine 59–cysteine 71, and cysteine 65–cysteine 78.

This sequence belongs to the neurotoxin 10 (Hwtx-1) family. 17 (Hntx-9) subfamily. Expressed by the venom gland.

It is found in the secreted. Ion channel inhibitor. The protein is Omega-theraphotoxin-Hhn1f 4 of Cyriopagopus hainanus (Chinese bird spider).